Reading from the N-terminus, the 281-residue chain is Large ribosomal subunit protein uL2 (281 aa).

The segment at 222–281 (TVRGSVMNPNDHPHGGGEGRTPIGRKSPVTPWGKKALGVKTRNTKKPSEKLIVRKRNAKK) is disordered.

This sequence belongs to the universal ribosomal protein uL2 family. Part of the 50S ribosomal subunit. Forms a bridge to the 30S subunit in the 70S ribosome.

One of the primary rRNA binding proteins. Required for association of the 30S and 50S subunits to form the 70S ribosome, for tRNA binding and peptide bond formation. It has been suggested to have peptidyltransferase activity; this is somewhat controversial. Makes several contacts with the 16S rRNA in the 70S ribosome. The protein is Large ribosomal subunit protein uL2 of Mesoplasma florum (strain ATCC 33453 / NBRC 100688 / NCTC 11704 / L1) (Acholeplasma florum).